A 508-amino-acid polypeptide reads, in one-letter code: Histidine ammonia-lyase (508 aa).

A cross-link (5-imidazolinone (Ala-Gly)) is located at residues 143 to 145; it reads ASG. Ser144 bears the 2,3-didehydroalanine (Ser) mark.

This sequence belongs to the PAL/histidase family. Contains an active site 4-methylidene-imidazol-5-one (MIO), which is formed autocatalytically by cyclization and dehydration of residues Ala-Ser-Gly.

It is found in the cytoplasm. It carries out the reaction L-histidine = trans-urocanate + NH4(+). Its pathway is amino-acid degradation; L-histidine degradation into L-glutamate; N-formimidoyl-L-glutamate from L-histidine: step 1/3. This is Histidine ammonia-lyase from Anaeromyxobacter dehalogenans (strain 2CP-C).